We begin with the raw amino-acid sequence, 354 residues long: D-alanine--D-alanine ligase (354 aa).

The ATP-grasp domain maps to 154 to 348; that stretch reads RSWFLTNNIN…FTNLIEEIIK (195 aa). Residue 181-232 coordinates ATP; that stretch reads MKRPYVIKPITQGSSIGIEVIFEEDDFNFANYDFPYGDQVIIEKYIKGRELQ. Residues E301, E315, and N317 each contribute to the Mg(2+) site.

It belongs to the D-alanine--D-alanine ligase family. It depends on Mg(2+) as a cofactor. Mn(2+) is required as a cofactor.

It is found in the cytoplasm. It catalyses the reaction 2 D-alanine + ATP = D-alanyl-D-alanine + ADP + phosphate + H(+). The protein operates within cell wall biogenesis; peptidoglycan biosynthesis. In terms of biological role, cell wall formation. The protein is D-alanine--D-alanine ligase of Rickettsia canadensis (strain McKiel).